The primary structure comprises 302 residues: Diacetylchitobiose uptake system permease protein NgcG (302 aa).

The next 6 membrane-spanning stretches (helical) occupy residues 40 to 60 (LLILWSVIVIVPMLWVLMSSF), 99 to 119 (VIVVVSALILVMLLGAMCAYV), 131 to 151 (IYYVMLAGLTFPVFLAIVPLF), 166 to 186 (LILTYVAFALPFTMFFLYSFF), 221 to 241 (AAVAIFNFLGLWNQFLLPVAL), and 268 to 288 (GALFAAIVVTVVPVLLVYCVF). The region spanning 95–288 (FLNSVIVVVS…VPVLLVYCVF (194 aa)) is the ABC transmembrane type-1 domain.

The protein belongs to the binding-protein-dependent transport system permease family. The complex is composed of two ATP-binding proteins (MsiK), two transmembrane proteins (NgcF and NgcG) and a solute-binding protein (NgcE).

Its subcellular location is the cell membrane. In terms of biological role, part of the ABC transporter complex NgcEFG-MsiK involved in N,N'-diacetylchitobiose ((GlcNAc)2) uptake. Responsible for the translocation of the substrate across the membrane. This is Diacetylchitobiose uptake system permease protein NgcG from Streptomyces coelicolor (strain ATCC BAA-471 / A3(2) / M145).